Reading from the N-terminus, the 541-residue chain is Formimidoyltransferase-cyclodeaminase (541 aa).

Residues methionine 1–phenylalanine 181 form a formiminotransferase N-subdomain region. The For formimidoyltransferase activity role is filled by histidine 82. Glycine 163–glycine 172 contacts folate. The formiminotransferase C-subdomain stretch occupies residues leucine 182–valine 326. Positions proline 327–serine 334 are linker. A cyclodeaminase/cyclohydrolase region spans residues leucine 335–glutamate 541. Aspartate 412 functions as the For cyclodeaminase activity in the catalytic mechanism. Serine 520 carries the post-translational modification Phosphoserine.

This sequence in the C-terminal section; belongs to the cyclodeaminase/cyclohydrolase family. The protein in the N-terminal section; belongs to the formiminotransferase family. In terms of assembly, homooctamer, including four polyglutamate binding sites. The subunits are arranged as a tetramer of dimers, and form a planar ring-shaped structure.

Its subcellular location is the cytoplasm. The protein resides in the cytoskeleton. It is found in the microtubule organizing center. It localises to the centrosome. The protein localises to the centriole. Its subcellular location is the golgi apparatus. It carries out the reaction 5-formimidoyltetrahydrofolate + L-glutamate = N-formimidoyl-L-glutamate + (6S)-5,6,7,8-tetrahydrofolate. It catalyses the reaction (6S)-5-formyl-5,6,7,8-tetrahydrofolate + L-glutamate = N-formyl-L-glutamate + (6S)-5,6,7,8-tetrahydrofolate + H(+). The enzyme catalyses 5-formimidoyltetrahydrofolate + 2 H(+) = (6R)-5,10-methenyltetrahydrofolate + NH4(+). The protein operates within amino-acid degradation; L-histidine degradation into L-glutamate; L-glutamate from N-formimidoyl-L-glutamate (transferase route): step 1/1. It functions in the pathway one-carbon metabolism; tetrahydrofolate interconversion. Its function is as follows. Folate-dependent enzyme, that displays both transferase and deaminase activity. Serves to channel one-carbon units from formiminoglutamate to the folate pool. In terms of biological role, binds and promotes bundling of vimentin filaments originating from the Golgi. The chain is Formimidoyltransferase-cyclodeaminase (Ftcd) from Mus musculus (Mouse).